The following is a 705-amino-acid chain: Beta-xylosidase (705 aa).

Belongs to the glycosyl hydrolase 52 family.

It catalyses the reaction Hydrolysis of (1-&gt;4)-beta-D-xylans, to remove successive D-xylose residues from the non-reducing termini.. The protein operates within glycan degradation; xylan degradation. This chain is Beta-xylosidase (xylA), found in Geobacillus stearothermophilus (Bacillus stearothermophilus).